The sequence spans 358 residues: MSHSTHPYQKELEVATLAVKRASLLTKQLSDSIVQTAKSGTLTKDDKSPVTIGDFASQAIINHAIKLNFPNDEIVGEEDSRELQENTGLADQMLQLITKIQKETSGYNDIVGTLTDKNEVYQSIDFGNSQGGSKGRFWALDPIDGTKGFLRGDQFAVCLALIEDGKVVLGVIGCPNLSENIVSNEEHSGVVGGLYSAVKGVGSFYSELFKEGAEPLSQQKRIKMQNHTNPSQLKVVEGVEKGHSSHSTQTEIKAKFGFDSATVAKQTINLDSQVKYCVLASGQADIYLRLPVNETYREKIWDHAAGNILIYESGGQVGDVTGSPLNFGNGRTLDSKGVIAANKGIFDKVIDAVTEVRK.

The active-site Proton acceptor is Asp54. Residues Glu77, Asp141, Ile143, and Asp144 each contribute to the Mg(2+) site. Residue Thr146 is the Proton acceptor of the active site. Residues Thr146, His243, Ser272, Lys275, Arg289, and Asp302 each contribute to the adenosine 3',5'-bisphosphate site. The AMP site is built by His243, Ser272, Lys275, Arg289, and Asp302. Asp302 is a Mg(2+) binding site.

Belongs to the inositol monophosphatase superfamily. Requires Mg(2+) as cofactor.

It carries out the reaction 3'-phosphoadenylyl sulfate + H2O = adenosine 5'-phosphosulfate + phosphate. The catalysed reaction is adenosine 3',5'-bisphosphate + H2O = AMP + phosphate. It catalyses the reaction adenosine 2',5'-bisphosphate + H2O = AMP + phosphate. Its function is as follows. Phosphatase that converts adenosine 3'-phosphate 5'-phosphosulfate (PAPS) to adenosine 5'-phosphosulfate (APS) and 3'(2')-phosphoadenosine 5'-phosphate (PAP) to AMP. Regulates the flux of sulfur in the sulfur-activation pathway by converting PAPS to APS. Involved in salt tolerance. This Candida albicans (strain SC5314 / ATCC MYA-2876) (Yeast) protein is 3'(2'),5'-bisphosphate nucleotidase 2 (HAL22).